A 411-amino-acid chain; its full sequence is O-glucosyltransferase rumi (411 aa).

Positions 1 to 20 (MLINHLIVVLLISLVGTGGA) are cleaved as a signal peptide. 4 disulfides stabilise this stretch: cysteine 64/cysteine 75, cysteine 73/cysteine 378, cysteine 120/cysteine 126, and cysteine 282/cysteine 305. The active-site Proton donor/acceptor is the aspartate 151. The interaction with the consensus sequence C-X-S-X-[PA]-C in peptide substrates stretch occupies residues 192–197 (ATKLHP). Residues 229-233 (RGSRT), arginine 237, 276-278 (VSF), and 294-298 (AASFR) each bind UDP-alpha-D-glucose. The Prevents secretion from ER motif lies at 408–411 (KDEL).

This sequence belongs to the glycosyltransferase 90 family.

It localises to the endoplasmic reticulum lumen. It participates in protein modification; protein glycosylation. Its function is as follows. Protein O-glucosyltransferase. Catalyzes the reaction that attaches glucose through an O-glycosidic linkage to a conserved serine residue found in the consensus sequence C-X-S-X-[PA]-C in epidermal growth factor-like repeats. Regulates Notch signaling by glucosylating Notch in the ER, glucosylation is required for the correct folding and cleavage of Notch. The chain is O-glucosyltransferase rumi from Drosophila melanogaster (Fruit fly).